Reading from the N-terminus, the 397-residue chain is Na(+)/H(+) antiporter NhaA 1 (397 aa).

12 helical membrane-spanning segments follow: residues 15-35 (FQLE…ALII), 42-62 (YLYG…LNIA), 65-85 (LLLW…GLEV), 101-121 (ILPA…YWFI), 129-149 (VAGW…VLAL), 160-180 (LFLM…IALF), 183-203 (GTLS…LVAM), 219-241 (LILW…ALAF), 265-285 (WVAY…SLAG), 299-319 (ITIG…WVAV), 335-355 (ILGV…VGSL), and 370-390 (MGIL…TAMA).

It belongs to the NhaA Na(+)/H(+) (TC 2.A.33) antiporter family.

The protein localises to the cell inner membrane. The catalysed reaction is Na(+)(in) + 2 H(+)(out) = Na(+)(out) + 2 H(+)(in). Functionally, na(+)/H(+) antiporter that extrudes sodium in exchange for external protons. This chain is Na(+)/H(+) antiporter NhaA 1, found in Pseudomonas putida (strain ATCC 47054 / DSM 6125 / CFBP 8728 / NCIMB 11950 / KT2440).